The primary structure comprises 116 residues: Non-specific lipid transfer protein GPI-anchored 17 (116 aa).

A signal peptide spans Met1–Ala24. Disulfide bonds link Cys31–Cys74, Cys42–Cys58, and Cys59–Cys99. A lipid anchor (GPI-anchor amidated asparagine) is attached at Asn107. Residues Gly108–Leu116 constitute a propeptide, removed in mature form. An N-linked (GlcNAc...) asparagine glycan is attached at Asn113.

It belongs to the plant LTP family. As to expression, expressed in seedlings, preferentially in roots.

It is found in the cell membrane. In terms of biological role, probable lipid transfer protein. This chain is Non-specific lipid transfer protein GPI-anchored 17, found in Arabidopsis thaliana (Mouse-ear cress).